A 158-amino-acid polypeptide reads, in one-letter code: FUN14 domain-containing protein 1 (158 aa).

The short motif at 21-24 is the YXXL element; it reads YEVV. 2 helical membrane-spanning segments follow: residues 51 to 70 and 77 to 98; these read YSVT…AGYL and IAAT…SGYV.

This sequence belongs to the FUN14 family.

It is found in the mitochondrion outer membrane. In terms of biological role, acts as an activator of hypoxia-induced mitophagy, an important mechanism for mitochondrial quality control. The chain is FUN14 domain-containing protein 1 (fundc1) from Tetraodon nigroviridis (Spotted green pufferfish).